Here is a 475-residue protein sequence, read N- to C-terminus: uncharacterized protein (475 aa).

This sequence to E.coli YihN.

This is an uncharacterized protein from Mycoplasma pneumoniae (strain ATCC 29342 / M129 / Subtype 1) (Mycoplasmoides pneumoniae).